The primary structure comprises 712 residues: uncharacterized protein (712 aa).

3 disordered regions span residues 1–46 (MAKI…NNLN), 107–264 (NIKP…IPQA), and 370–389 (QPQH…QQNQ). 3 stretches are compositionally biased toward low complexity: residues 10–46 (INNS…NNLN), 107–143 (NIKP…SNSS), and 161–173 (TFDN…NSSN). The span at 178-187 (ISPTTSPQLE) shows a compositional bias: polar residues. Low complexity-rich tracts occupy residues 188–198 (QHQQYQQQQHQ) and 241–264 (PLQQ…IPQA).

This is an uncharacterized protein from Dictyostelium discoideum (Social amoeba).